Consider the following 599-residue polypeptide: UvrABC system protein C (599 aa).

The 79-residue stretch at 13 to 91 (NLPGVYRMIN…IKGFMPRYNV (79 aa)) folds into the GIY-YIG domain. The region spanning 200–235 (QQVMDELGEKMNEAAEKMEYELAAVYRDRIQSLRQV) is the UVR domain.

The protein belongs to the UvrC family. As to quaternary structure, interacts with UvrB in an incision complex.

It is found in the cytoplasm. Its function is as follows. The UvrABC repair system catalyzes the recognition and processing of DNA lesions. UvrC both incises the 5' and 3' sides of the lesion. The N-terminal half is responsible for the 3' incision and the C-terminal half is responsible for the 5' incision. The polypeptide is UvrABC system protein C (Methylobacillus flagellatus (strain ATCC 51484 / DSM 6875 / VKM B-1610 / KT)).